Reading from the N-terminus, the 987-residue chain is UvrABC system protein A (987 aa).

Position 33-40 (33-40) interacts with ATP; sequence GLSGSGKS. A C4-type zinc finger spans residues 255–282; it reads CPVCDYSLPELEPRLFSFNAPVGACPSC. 2 consecutive ABC transporter domains span residues 312 to 589 and 609 to 938; these read WDRR…PRSL and PNPK…QFLA. 642–649 contributes to the ATP binding site; sequence GVSGSGKS. The C4-type zinc-finger motif lies at 741–767; the sequence is CEACQGDGMIKVEMHFLPDVYVPCDVC. The segment at 948–987 is disordered; sequence ETRPAAMANKPDARPPRKVKPEKVAKAAKSATKKTAKKAS. Basic and acidic residues predominate over residues 958 to 972; sequence PDARPPRKVKPEKVA. Positions 978 to 987 are enriched in basic residues; sequence ATKKTAKKAS.

It belongs to the ABC transporter superfamily. UvrA family. As to quaternary structure, forms a heterotetramer with UvrB during the search for lesions.

The protein resides in the cytoplasm. The UvrABC repair system catalyzes the recognition and processing of DNA lesions. UvrA is an ATPase and a DNA-binding protein. A damage recognition complex composed of 2 UvrA and 2 UvrB subunits scans DNA for abnormalities. When the presence of a lesion has been verified by UvrB, the UvrA molecules dissociate. This chain is UvrABC system protein A, found in Xanthomonas axonopodis pv. citri (strain 306).